The primary structure comprises 427 residues: L-rhamnose isomerase (427 aa).

Mn(2+) is bound by residues histidine 264, aspartate 296, and aspartate 298.

This sequence belongs to the rhamnose isomerase family. Requires Mn(2+) as cofactor.

The protein localises to the cytoplasm. It carries out the reaction L-rhamnopyranose = L-rhamnulose. It participates in carbohydrate degradation; L-rhamnose degradation; glycerone phosphate from L-rhamnose: step 1/3. Its function is as follows. Catalyzes the interconversion of L-rhamnose and L-rhamnulose. In Rhodopirellula baltica (strain DSM 10527 / NCIMB 13988 / SH1), this protein is L-rhamnose isomerase.